The sequence spans 542 residues: Phosphoenolpyruvate carboxykinase (ATP) (542 aa).

Substrate contacts are provided by arginine 67, tyrosine 208, and lysine 214. Residues lysine 214, histidine 233, and 249–257 (GLSGTGKTT) each bind ATP. Residues lysine 214 and histidine 233 each contribute to the Mn(2+) site. Aspartate 270 serves as a coordination point for Mn(2+). ATP contacts are provided by residues glutamate 298, arginine 334, 450–451 (RI), and threonine 456. Position 334 (arginine 334) interacts with substrate.

Belongs to the phosphoenolpyruvate carboxykinase (ATP) family. Monomer. It depends on Mn(2+) as a cofactor.

It is found in the cytoplasm. It catalyses the reaction oxaloacetate + ATP = phosphoenolpyruvate + ADP + CO2. The protein operates within carbohydrate biosynthesis; gluconeogenesis. Involved in the gluconeogenesis. Catalyzes the conversion of oxaloacetate (OAA) to phosphoenolpyruvate (PEP) through direct phosphoryl transfer between the nucleoside triphosphate and OAA. The protein is Phosphoenolpyruvate carboxykinase (ATP) of Vibrio campbellii (strain ATCC BAA-1116).